The primary structure comprises 318 residues: NADH-ubiquinone oxidoreductase chain 1 (318 aa).

Helical transmembrane passes span Phe-3–Leu-23, Leu-68–Pro-88, Ile-102–Ala-122, Leu-146–Ile-166, His-171–Ala-191, Leu-222–Phe-242, Glu-253–Ile-273, and Leu-294–Ile-314.

It belongs to the complex I subunit 1 family.

The protein resides in the mitochondrion inner membrane. It carries out the reaction a ubiquinone + NADH + 5 H(+)(in) = a ubiquinol + NAD(+) + 4 H(+)(out). Core subunit of the mitochondrial membrane respiratory chain NADH dehydrogenase (Complex I) that is believed to belong to the minimal assembly required for catalysis. Complex I functions in the transfer of electrons from NADH to the respiratory chain. The immediate electron acceptor for the enzyme is believed to be ubiquinone. This chain is NADH-ubiquinone oxidoreductase chain 1 (MT-ND1), found in Nyctalus plancyi velutinus (Fine-haired noctule).